Here is a 401-residue protein sequence, read N- to C-terminus: S-adenosylmethionine synthase (401 aa).

Position 16 (H16) interacts with ATP. D18 provides a ligand contact to Mg(2+). E44 serves as a coordination point for K(+). L-methionine-binding residues include E57 and Q100. The tract at residues 100 to 110 (QSPDIAQGVNE) is flexible loop. Residues 174 to 176 (DAK), 241 to 242 (RF), D250, 256 to 257 (RK), A273, and K277 each bind ATP. L-methionine is bound at residue D250. K281 provides a ligand contact to L-methionine.

The protein belongs to the AdoMet synthase family. Homotetramer; dimer of dimers. Requires Mg(2+) as cofactor. K(+) serves as cofactor.

It localises to the cytoplasm. It carries out the reaction L-methionine + ATP + H2O = S-adenosyl-L-methionine + phosphate + diphosphate. It functions in the pathway amino-acid biosynthesis; S-adenosyl-L-methionine biosynthesis; S-adenosyl-L-methionine from L-methionine: step 1/1. In terms of biological role, catalyzes the formation of S-adenosylmethionine (AdoMet) from methionine and ATP. The overall synthetic reaction is composed of two sequential steps, AdoMet formation and the subsequent tripolyphosphate hydrolysis which occurs prior to release of AdoMet from the enzyme. This Streptococcus equi subsp. zooepidemicus (strain MGCS10565) protein is S-adenosylmethionine synthase.